We begin with the raw amino-acid sequence, 387 residues long: MRYLTAGESHGPQLTAIIEGVPSNLPISIEEINEQLARRQKGHGRGRRMQIEKDQVKILSGVRHGYTTGAPITLVVENKDWTHWQGIMSAEPVEEGSEEKRRVSRPRPGHADLNGAIKYHQRDMRNILERSSARETTVRVAVGAVARQLLAQFGIRIGGQVLQINEIVAKRQEVSLDELIARTEESPVRCLDKEAEPLMMAAIDKAKEDGDSLGGTVEVIVEGVPIGLGSHVQWDRKLDGRLAQAIMSIQAFKGVEIGIGFEAAGLKGSQVHDEIVWNEETGYSRKTNRAGGLEGGMTTGMPVVVRGVMKPIPTLYKPLMSVDIDSREPFSASIERSDSCAVPAASVVAEAVVAWEIANAMCEKFPSDSLDDMEENVRQYRAYTEKF.

R39 and R45 together coordinate NADP(+). The segment at 92–113 is disordered; that stretch reads PVEEGSEEKRRVSRPRPGHADL. Residues 130-132, 250-251, G295, 310-314, and R336 contribute to the FMN site; these read RSS, QA, and KPIPT.

This sequence belongs to the chorismate synthase family. Homotetramer. Requires FMNH2 as cofactor.

It catalyses the reaction 5-O-(1-carboxyvinyl)-3-phosphoshikimate = chorismate + phosphate. The protein operates within metabolic intermediate biosynthesis; chorismate biosynthesis; chorismate from D-erythrose 4-phosphate and phosphoenolpyruvate: step 7/7. Functionally, catalyzes the anti-1,4-elimination of the C-3 phosphate and the C-6 proR hydrogen from 5-enolpyruvylshikimate-3-phosphate (EPSP) to yield chorismate, which is the branch point compound that serves as the starting substrate for the three terminal pathways of aromatic amino acid biosynthesis. This reaction introduces a second double bond into the aromatic ring system. The chain is Chorismate synthase from Brevibacillus brevis (strain 47 / JCM 6285 / NBRC 100599).